The chain runs to 461 residues: Deoxyhypusine synthase (461 aa).

Spermidine is bound by residues 166 to 167 (EH), glutamate 331, histidine 377, 403 to 405 (GSD), and 412 to 418 (EAVSWGK). Lysine 418 serves as the catalytic Nucleophile. A helical transmembrane segment spans residues 428–448 (VYSEVTIVFPLIVVHVFVAWV).

This sequence belongs to the deoxyhypusine synthase family. As to quaternary structure, heterotetramer formed by a homodimer of the non-catalytic regulatory subunit DHSp and a homodimer of the catalytic subunit DHSc where DHSc appears to bind spermidine and DHSp appears to bind NAD(+). The cofactor is NAD(+).

Its subcellular location is the membrane. The enzyme catalyses [eIF5A protein]-L-lysine + spermidine = [eIF5A protein]-deoxyhypusine + propane-1,3-diamine. It functions in the pathway protein modification; eIF5A hypusination. With respect to regulation, allosterically activated by DHSp. Inhibited by spermididine analog N1-guanyl-1,7-diamineoheptane (GC7). Its function is as follows. In association with the non-catalytic regulatory subunit DHSp, catalyzes the NAD-dependent oxidative cleavage of spermidine and the subsequent transfer of the butylamine moiety of spermidine to the epsilon-amino group of a specific lysine residue of the eIF5A precursor protein to form the intermediate deoxyhypusine residue. Regulates protein levels of its regulatory subunit DHSp. Required for cell growth and survival. The sequence is that of Deoxyhypusine synthase from Trypanosoma brucei brucei (strain 927/4 GUTat10.1).